The following is a 448-amino-acid chain: F-box/FBD/LRR-repeat protein At2g04230 (448 aa).

An F-box domain is found at 12-64 (EDRISDLPDALLLQILSSLPTENAIATSVLSKRWRSLWTMLPKLKFDSNFNPV). LRR repeat units follow at residues 72-98 (PTMFSENVYKTLSLHKAPVLESLHLSF), 149-176 (ILKLKCAIDLDFPSRVCLKSLRKLYLDQ), 177-202 (VHFKDEESVCNLLCGCPSLQDLVVHR), 204-225 (SNADVATFTIASPSLQRLTIED), 226-251 (LRQEGGYGNGSYVINAPGLKYLNING), 271-296 (ISNVSGITNENILESLTSAKRLILHL), and 319-345 (THEREWWNLLSIMLDSSPKLQILKLTD). The FBD domain maps to 359–410 (KWNPPKCAPECLLFHLETFLWIGYEWQRGDEKEVATYILENARRLKKATFST).

The polypeptide is F-box/FBD/LRR-repeat protein At2g04230 (Arabidopsis thaliana (Mouse-ear cress)).